A 364-amino-acid polypeptide reads, in one-letter code: 3-isopropylmalate dehydrogenase (364 aa).

79 to 92 (GPKWEHLPAAEQPE) provides a ligand contact to NAD(+). Substrate-binding residues include R100, R110, R139, and D228. 3 residues coordinate Mg(2+): D228, D252, and D256. 286–298 (GSAPDIAGKDIAN) is an NAD(+) binding site.

This sequence belongs to the isocitrate and isopropylmalate dehydrogenases family. LeuB type 1 subfamily. In terms of assembly, homodimer. Mg(2+) is required as a cofactor. It depends on Mn(2+) as a cofactor.

The protein localises to the cytoplasm. It carries out the reaction (2R,3S)-3-isopropylmalate + NAD(+) = 4-methyl-2-oxopentanoate + CO2 + NADH. The protein operates within amino-acid biosynthesis; L-leucine biosynthesis; L-leucine from 3-methyl-2-oxobutanoate: step 3/4. In terms of biological role, catalyzes the oxidation of 3-carboxy-2-hydroxy-4-methylpentanoate (3-isopropylmalate) to 3-carboxy-4-methyl-2-oxopentanoate. The product decarboxylates to 4-methyl-2 oxopentanoate. The protein is 3-isopropylmalate dehydrogenase of Sodalis glossinidius (strain morsitans).